Here is a 277-residue protein sequence, read N- to C-terminus: Phosphatidylglycerol--prolipoprotein diacylglyceryl transferase (277 aa).

The next 4 membrane-spanning stretches (helical) occupy residues 18-38 (IAIY…YFMA), 54-74 (DLLV…YVIF), 91-111 (EGGI…IVFA), and 115-135 (GLSF…GQAI). Residue arginine 137 participates in a 1,2-diacyl-sn-glycero-3-phospho-(1'-sn-glycerol) binding. A run of 3 helical transmembrane segments spans residues 177–197 (QPTF…LLLL), 205–225 (GELF…IEGM), and 236–256 (LRTA…LWVY).

The protein belongs to the Lgt family.

It is found in the cell membrane. It carries out the reaction L-cysteinyl-[prolipoprotein] + a 1,2-diacyl-sn-glycero-3-phospho-(1'-sn-glycerol) = an S-1,2-diacyl-sn-glyceryl-L-cysteinyl-[prolipoprotein] + sn-glycerol 1-phosphate + H(+). The protein operates within protein modification; lipoprotein biosynthesis (diacylglyceryl transfer). Its function is as follows. Catalyzes the transfer of the diacylglyceryl group from phosphatidylglycerol to the sulfhydryl group of the N-terminal cysteine of a prolipoprotein, the first step in the formation of mature lipoproteins. The polypeptide is Phosphatidylglycerol--prolipoprotein diacylglyceryl transferase (Shouchella clausii (strain KSM-K16) (Alkalihalobacillus clausii)).